Here is a 152-residue protein sequence, read N- to C-terminus: Putative polyketide cyclase (152 aa).

This sequence to polyketide cyclases.

It participates in antibiotic biosynthesis; curamycin biosynthesis. The sequence is that of Putative polyketide cyclase (curF) from Streptomyces cyaneus (Streptomyces curacoi).